Reading from the N-terminus, the 1060-residue chain is Anoctamin-8 (1060 aa).

The tract at residues 1–32 (MAEAASGAGDVTLEGERGKRPPPEGEPAAPAS) is disordered. Ala-2 bears the N-acetylalanine mark. Residues 2-244 (AEAASGAGDV…DDICDYFGVK (243 aa)) lie on the Cytoplasmic side of the membrane. Basic and acidic residues predominate over residues 14-23 (EGERGKRPPP). The helical transmembrane segment at 245 to 265 (IAMYFAWLGFYTSAMVYPAVF) threads the bilayer. The Extracellular segment spans residues 266 to 281 (GSVLYTFTEADQTSRD). A helical transmembrane segment spans residues 282 to 302 (VSCVVFALFNVIWSTLFLEEW). Residues 303 to 356 (KRRGAELAYKWGTLDSPGEAVEEPRPQFRGIRRISPITRAEEFYYPPWKRLLFQ) lie on the Cytoplasmic side of the membrane. Ser-318 carries the post-translational modification Phosphoserine. The helical transmembrane segment at 357-377 (LLVSLPLCLACLICVFILMLG) threads the bilayer. Residues 378-400 (CFQLQELVLSVKGLPRLVRFLPK) are Extracellular-facing. A helical transmembrane segment spans residues 401-421 (VMLALLVSVSAEGYKKLAVWL). At 422-437 (NDMENYRLESTYERHL) the chain is on the cytoplasmic side. A helical transmembrane segment spans residues 438 to 458 (IIKVVLFQFVNSYLSLFYIGF). At 459–745 (YLKDMDRLKE…YEDTFQDYQE (287 aa)) the chain is on the extracellular side. Disordered stretches follow at residues 529–605 (AQAD…SLLD), 619–640 (GAGR…SPTM), 653–672 (AEED…EPQT), and 680–723 (GEGR…HSPQ). The segment covering 534-547 (GGAGSRRCLGGGCG) has biased composition (gly residues). 2 stretches are compositionally biased toward acidic residues: residues 549 to 559 (PEEENEEEEEA) and 581 to 602 (EEDE…EEGS). Residue Ser-665 is modified to Phosphoserine. Positions 680–694 (GEGRDQGPDGDRDTE) are enriched in basic and acidic residues. Residue Asn-708 is glycosylated (N-linked (GlcNAc...) asparagine). Residues 746 to 766 (MFVQFGYVVLFSSAFPLAALC) form a helical membrane-spanning segment. Over 767-802 (ALVNNLIEIRSDAFKLCTGLQRPFGRRVESIGQWQK) the chain is Cytoplasmic. The residue at position 796 (Ser-796) is a Phosphoserine. Residues 803–823 (VMEAMGVLAIVVNCYLIGQCG) form a helical membrane-spanning segment. Residues 824–836 (QLQRLFPWLSPEA) are Extracellular-facing. A helical membrane pass occupies residues 837–857 (AIVSVVVLEHLALLVKYLIHV). Over 858 to 1060 (AIPDIPGWVA…PRPEDAGHRP (203 aa)) the chain is Cytoplasmic. The segment at 884–1060 (HERQAQQRFQ…PRPEDAGHRP (177 aa)) is disordered. 2 stretches are compositionally biased toward basic and acidic residues: residues 899-927 (RREE…EARA) and 935-950 (VAER…ERPR). Positions 972–986 (TRPPAPTGCAPPPRS) are enriched in pro residues. An Asymmetric dimethylarginine; alternate modification is found at Arg-991. At Arg-991 the chain carries Omega-N-methylarginine; alternate. Position 999 is an omega-N-methylarginine (Arg-999). Over residues 1049–1060 (PEPRPEDAGHRP) the composition is skewed to basic and acidic residues.

The protein belongs to the anoctamin family. As to expression, predominant expression seen in epithelial tissues.

The protein localises to the cell membrane. In terms of biological role, does not exhibit calcium-activated chloride channel (CaCC) activity. The polypeptide is Anoctamin-8 (Ano8) (Mus musculus (Mouse)).